Here is a 304-residue protein sequence, read N- to C-terminus: MIYTCTMNTAVDLFVETDELLPDVVNRTKDEDYQPNGKGVNISFMLKRLGLDNTALGFTGGFTGRFIENELLNEKIVTDFVEVEGISRINIFINSTREFKIVNKGPLISEARKQELINKIRQIPPGRFLFISGSLPRGVPDDMYLSLSEIAAENKLKLILDISSPVLLDCLSYHPYLIKPNEQELAAFFSRKKALSEEEIIHCGKELLDRGAERVLISRGKDGALYLDRQRTLKATAAKGKVVNTACAGDAMLAVFVGKQELGCSVPEALRHASAAGSLTAFSKGLGDVSKLDQTASQIQITHL.

The active-site Proton acceptor is the Asp250.

Belongs to the carbohydrate kinase PfkB family. The cofactor is Mg(2+).

The catalysed reaction is alpha-D-tagatopyranose 1-phosphate + ATP = D-tagatofuranose 1,6-bisphosphate + ADP + H(+). It participates in carbohydrate degradation. With respect to regulation, activity is inhibited by tagatose-6-phosphate and fructose-6-phosphate. Kinase involved in a D-tagatose catabolic pathway. Catalyzes the phosphorylation of D-tagatose-1-phosphate (Tag-1P) to D-tagatose-1,6-bisphosphate. Can also use D-fructose-1-phosphate, with 40-fold lower catalytic efficiency, but not tagatose-6-phosphate or fructose-6-phosphate. The substrate, which occurs in a pyranose form in solution, may undergo a change to the furanose conformation after binding to the enzyme, in order to permit phosphorylation at C-6. The sequence is that of D-tagatose-1-phosphate kinase from Bacillus licheniformis (strain ATCC 14580 / DSM 13 / JCM 2505 / CCUG 7422 / NBRC 12200 / NCIMB 9375 / NCTC 10341 / NRRL NRS-1264 / Gibson 46).